The primary structure comprises 355 residues: Peptide chain release factor 1 (355 aa).

An N5-methylglutamine modification is found at Gln-231. Positions 283-292 (IAKETSERKS) are enriched in basic and acidic residues. A disordered region spans residues 283–303 (IAKETSERKSQVGTGDRSGRI).

This sequence belongs to the prokaryotic/mitochondrial release factor family. Methylated by PrmC. Methylation increases the termination efficiency of RF1.

The protein resides in the cytoplasm. Functionally, peptide chain release factor 1 directs the termination of translation in response to the peptide chain termination codons UAG and UAA. The sequence is that of Peptide chain release factor 1 from Campylobacter curvus (strain 525.92).